The following is a 942-amino-acid chain: Valine--tRNA ligase (942 aa).

The 'HIGH' region motif lies at 43-53 (PNVTGTLHMGH). The 'KMSKS' region motif lies at 551-555 (KMSKS). Lys-554 contributes to the ATP binding site. Residues 876-942 (EGLVDLDAER…AGLREQRAKL (67 aa)) are a coiled coil.

This sequence belongs to the class-I aminoacyl-tRNA synthetase family. ValS type 1 subfamily. Monomer.

It localises to the cytoplasm. It carries out the reaction tRNA(Val) + L-valine + ATP = L-valyl-tRNA(Val) + AMP + diphosphate. Catalyzes the attachment of valine to tRNA(Val). As ValRS can inadvertently accommodate and process structurally similar amino acids such as threonine, to avoid such errors, it has a 'posttransfer' editing activity that hydrolyzes mischarged Thr-tRNA(Val) in a tRNA-dependent manner. This chain is Valine--tRNA ligase, found in Stenotrophomonas maltophilia (strain K279a).